Consider the following 370-residue polypeptide: Anhydro-N-acetylmuramic acid kinase (370 aa).

Gly12 to Asp19 contacts ATP.

The protein belongs to the anhydro-N-acetylmuramic acid kinase family.

It carries out the reaction 1,6-anhydro-N-acetyl-beta-muramate + ATP + H2O = N-acetyl-D-muramate 6-phosphate + ADP + H(+). It functions in the pathway amino-sugar metabolism; 1,6-anhydro-N-acetylmuramate degradation. It participates in cell wall biogenesis; peptidoglycan recycling. Its function is as follows. Catalyzes the specific phosphorylation of 1,6-anhydro-N-acetylmuramic acid (anhMurNAc) with the simultaneous cleavage of the 1,6-anhydro ring, generating MurNAc-6-P. Is required for the utilization of anhMurNAc either imported from the medium or derived from its own cell wall murein, and thus plays a role in cell wall recycling. This chain is Anhydro-N-acetylmuramic acid kinase, found in Pectobacterium carotovorum subsp. carotovorum (strain PC1).